Here is a 159-residue protein sequence, read N- to C-terminus: Large ribosomal subunit protein mL43 (159 aa).

The disordered stretch occupies residues 123-159; it reads SPSIQGQWHPFTNKPTALGGLRPREVQNPAPTQRPAQ.

The protein belongs to the mitochondrion-specific ribosomal protein mL43 family. Component of the mitochondrial ribosome large subunit (39S) which comprises a 16S rRNA and about 50 distinct proteins.

Its subcellular location is the mitochondrion. The chain is Large ribosomal subunit protein mL43 (MRPL43) from Bos taurus (Bovine).